The primary structure comprises 1336 residues: Coiled-coil and C2 domain-containing protein 2A (1336 aa).

Disordered stretches follow at residues 1 to 29 and 70 to 97; these read MEAA…EQEV and VEDC…QTFI. A compositionally biased stretch (basic residues) spans 8–23; it reads KTAKKKRKTHTTRGYR. Over residues 70 to 89 the composition is skewed to acidic residues; the sequence is VEDCQESDEDSGGELAEEPT. Residues 136 to 156 are a coiled coil; it reads LSDLSELKDSQIRMLNRYQEQ. Residues 755-915 enclose the C2 domain; that stretch reads PREPSGWSGH…LASRTFEGCI (161 aa).

In terms of assembly, probable component of the tectonic-like complex (also named MKS complex), composed of B9d1, B9d2, Cc2d2a, Mks1 and tctn. Expressed in the antennae of chordotonal neurons and male germ cells (at protein level).

The protein localises to the cytoplasm. The protein resides in the cytoskeleton. Its subcellular location is the cilium basal body. It localises to the microtubule organizing center. It is found in the centrosome. The protein localises to the centriole. Its function is as follows. Probable component of the tectonic-like complex (also named MKS complex), a complex localized at the transition zone of primary cilia. Required for ciliary structure and function. The polypeptide is Coiled-coil and C2 domain-containing protein 2A (Drosophila melanogaster (Fruit fly)).